Reading from the N-terminus, the 1162-residue chain is Reticulon-4 (1162 aa).

An N-acetylmethionine modification is found at Met-1. The interval 1–183 is disordered; sequence MEDIDQSSLV…ALPAASEPVI (183 aa). Residues 1-988 lie on the Cytoplasmic side of the membrane; it reads MEDIDQSSLV…LYWRDIKKTG (988 aa). Residues Ser-7 and Ser-16 each carry the phosphoserine modification. Residues 7 to 16 are compositionally biased toward low complexity; that stretch reads SSLVSSSADS. The span at 31–54 shows a compositional bias: acidic residues; sequence EPEDEEDEEDEEEEEDDEDLEELE. A compositionally biased stretch (pro residues) spans 85–99; that stretch reads PPAPRGPLPAAPPTA. A Phosphoserine modification is found at Ser-105. Residues 109–127 show a composition bias toward low complexity; sequence SPAASAPSLPPAAAVLPSK. Phosphoserine occurs at positions 145, 165, 167, 329, and 344. Phosphothreonine is present on Thr-348. Residues 408 to 422 show a composition bias toward basic and acidic residues; that stretch reads SLEQKGHGKDSESRN. Residues 408-432 are disordered; it reads SLEQKGHGKDSESRNENASFPRTPE. The residue at position 426 (Ser-426) is a Phosphoserine. Position 430 is a phosphothreonine (Thr-430). A phosphoserine mark is found at Ser-489, Ser-690, Ser-727, Ser-768, and Ser-832. The segment at 711–730 is disordered; sequence ELVDDSSPESEPVDLFSDDS. The segment covering 713–730 has biased composition (acidic residues); the sequence is VDDSSPESEPVDLFSDDS. Thr-834 is subject to Phosphothreonine. Phosphoserine is present on residues Ser-857 and Ser-961. The 188-residue stretch at 975 to 1162 folds into the Reticulon domain; the sequence is VVDLLYWRDI…KIPGLKRKAE (188 aa). The helical transmembrane segment at 989–1009 threads the bilayer; it reads VVFGASLFLLLSLTVFSIVSV. Residues 1010 to 1078 are Lumenal-facing; sequence TAYIALALLS…VNSTIKELRR (69 aa). Lys-1074 is subject to N6-acetyllysine. The helical transmembrane segment at 1079–1099 threads the bilayer; it reads LFLVDDLVDSLKFAVLMWVFT. The Cytoplasmic segment spans residues 1100–1162; that stretch reads YVGALFNGLT…KIPGLKRKAE (63 aa).

In terms of assembly, binds to RTN4R. Interacts with ATL1. Interacts with TMEM170A. Interacts with RTN4IP1. Interacts in trans with CNTNAP1. Interacts with REEP5. Interacts with GPR50. Interacts with synaptic plasticity regulator PANTS; the interaction results in enhanced RTN4-mediated inhibition of AMPA receptor clustering. As to quaternary structure, homodimer. Interacts with BAD/Bcl-xl and BCL2. Interact with RTN3. Interacts with NGBR. Interacts with SPTLC1. Interacts with GRAMD4. Interacts with CDH5. Interacts with BACE1 and BACE2. Interacts with REEP5. Interacts with RETREG3. In terms of assembly, interacts with BACE1 and BACE2. Interacts with TMEM33. As to expression, expressed in cardiomyocytes (at protein level). Highly expressed in brain but not deteceted in aorta, femoral and carotid arteries. Main isoform expressed in neurons. Expressed in cardiomyocytes (at protein level). Expressed in splenocytes, T-cells, B-cells, bone marrow derived dendritic cells and macrophages (at protein level). Expressed in neurons. Highly expressed in endothelial cells and vascular smooth muscle cells, including blood vessels and mesenteric arteries. Expressed in bronchial and alveolar epithelial cells as well as vascular endothelial cells of lungs. In terms of tissue distribution, expressed in B-cells, bone marrow dendritic cells and macrophages (at protein level). As to expression, expressed in cardiomyocytes. Expressed at very low levels in neurons.

The protein localises to the endoplasmic reticulum membrane. Its subcellular location is the cell membrane. The protein resides in the synapse. It localises to the cell junction. Its function is as follows. Required to induce the formation and stabilization of endoplasmic reticulum (ER) tubules. They regulate membrane morphogenesis in the ER by promoting tubular ER production. They influence nuclear envelope expansion, nuclear pore complex formation and proper localization of inner nuclear membrane proteins. However each isoform have specific functions mainly depending on their tissue expression specificities. Developmental neurite growth regulatory factor with a role as a negative regulator of axon-axon adhesion and growth, and as a facilitator of neurite branching. Regulates neurite fasciculation, branching and extension in the developing nervous system. Involved in down-regulation of growth, stabilization of wiring and restriction of plasticity in the adult CNS. Regulates the radial migration of cortical neurons via an RTN4R-LINGO1 containing receptor complex. Acts as a negative regulator of central nervous system angiogenesis. Inhibits spreading, migration and sprouting of primary brain microvascular endothelial cells (MVECs). Also induces the retraction of MVECs lamellipodia and filopodia in a ROCK pathway-dependent manner. Functionally, mainly function in endothelial cells and vascular smooth muscle cells, is also involved in immune system regulation. Modulator of vascular remodeling, promotes the migration of endothelial cells but inhibits the migration of vascular smooth muscle cells. Regulates endothelial sphingolipid biosynthesis with direct effects on vascular function and blood pressure. Inhibits serine palmitoyltransferase, SPTLC1, the rate-limiting enzyme of the novo sphingolipid biosynthetic pathway, thereby controlling production of endothelial sphingosine-1-phosphate (S1P). Required to promote macrophage homing and functions such as cytokine/chemokine gene expression involved in angiogenesis, arteriogenesis and tissue repair. Mediates ICAM1 induced transendothelial migration of leukocytes such as monocytes and neutrophils and acute inflammation. Necessary for immune responses triggered by nucleic acid sensing TLRs, such as TLR9, is required for proper TLR9 location to endolysosomes. Also involved in immune response to LPS. Plays a role in liver regeneration through the modulation of hepatocytes proliferation. Reduces the anti-apoptotic activity of Bcl-xl and Bcl-2. This is likely consecutive to their change in subcellular location, from the mitochondria to the endoplasmic reticulum, after binding and sequestration. With isoform C, inhibits BACE1 activity and amyloid precursor protein processing. In terms of biological role, regulates cardiomyocyte apoptosis upon hypoxic conditions. With isoform B, inhibits BACE1 activity and amyloid precursor protein processing. The chain is Reticulon-4 from Mus musculus (Mouse).